The primary structure comprises 1345 residues: Protein dispatched homolog 2 (1345 aa).

The interval 1–28 (MAPEASPERSCSLHTCPLEDPTGAPVPP) is disordered. A helical transmembrane segment spans residues 125–145 (VAVIVGCLAFIFLCTLAGLLG). Asn304 and Asn420 each carry an N-linked (GlcNAc...) asparagine glycan. In terms of domain architecture, SSD spans 429–598 (LGLKPRLLKY…LLWLPATVVL (170 aa)). A run of 6 helical transmembrane segments spans residues 440-460 (LAED…GMSL), 465-485 (LFIT…AYFL), 497-517 (FVNL…TLIF), 544-564 (FGYL…GSYL), 572-592 (CFAL…LLWL), and 659-679 (YIWI…GGVS). N-linked (GlcNAc...) asparagine glycosylation is present at Asn776. A run of 5 helical transmembrane segments spans residues 919–939 (PAVV…LSTW), 945–965 (LFSV…LVLL), 974–994 (ALFL…YCIS), 1019–1039 (AMTT…TILL), and 1043–1063 (LGII…FFFQ). Disordered regions lie at residues 1251–1271 (VRVP…GHPI) and 1295–1345 (PNMP…GYSS). The span at 1297 to 1306 (MPNSHHSSLS) shows a compositional bias: polar residues. Arg1310 bears the Omega-N-methylarginine mark.

Belongs to the dispatched family.

Its subcellular location is the membrane. The sequence is that of Protein dispatched homolog 2 (Disp2) from Mus musculus (Mouse).